The sequence spans 106 residues: Large ribosomal subunit protein eL30 (106 aa).

The protein belongs to the eukaryotic ribosomal protein eL30 family.

The chain is Large ribosomal subunit protein eL30 (rpl30e) from Sulfurisphaera tokodaii (strain DSM 16993 / JCM 10545 / NBRC 100140 / 7) (Sulfolobus tokodaii).